The following is a 154-amino-acid chain: Putative pre-16S rRNA nuclease (154 aa).

The protein belongs to the YqgF nuclease family.

Its subcellular location is the cytoplasm. Functionally, could be a nuclease involved in processing of the 5'-end of pre-16S rRNA. The chain is Putative pre-16S rRNA nuclease from Rickettsia felis (strain ATCC VR-1525 / URRWXCal2) (Rickettsia azadi).